The chain runs to 205 residues: E3 ubiquitin-protein ligase complex slx8-rfp subunit rfp2 (205 aa).

The segment at 147–190 (CAKCGNELVSDEKKSIFAAKCGHLFCSTCAKELRKKTVPCPVQH) adopts an RING-type; degenerate zinc-finger fold.

As to quaternary structure, part of an E3 ubiquitin complex including rfp1, rfp2 and slx8. Interacts with slx8.

It localises to the nucleus. It catalyses the reaction S-ubiquitinyl-[E2 ubiquitin-conjugating enzyme]-L-cysteine + [acceptor protein]-L-lysine = [E2 ubiquitin-conjugating enzyme]-L-cysteine + N(6)-ubiquitinyl-[acceptor protein]-L-lysine.. The protein operates within protein modification; protein ubiquitination. Mediates ubiquitination and subsequent desumoylation/degradation of sumoylated proteins and proteins containing SUMO-like domains. Involved in maintaining genome stability where it acts in the cellular response to DNA damage. The chain is E3 ubiquitin-protein ligase complex slx8-rfp subunit rfp2 (rfp2) from Schizosaccharomyces pombe (strain 972 / ATCC 24843) (Fission yeast).